Consider the following 1673-residue polypeptide: Glutamine and serine-rich protein 1 (1673 aa).

8 disordered regions span residues 265–322 (VIPS…SSQA), 411–543 (DQTR…KSYV), 872–892 (RHMSPNFTPPKPQNMNNLSIN), 923–961 (QDLPSGMVSPVPGANQDDHEKNSENIKNPPNVNQEPKEG), 1050–1081 (DENANLKQIKRNMPLKRSVSKGPDVPGAQYSS), 1149–1182 (VIRPPCPGPLSPQSVAGAPVSDSGSASPPKKAEE), 1216–1272 (LSAL…EQLA), and 1390–1476 (KSKV…PPPI). A compositionally biased stretch (polar residues) spans 289–309 (SSKTPKSQSVVSPELTQSYTK). Low complexity-rich tracts occupy residues 310 to 322 (SSQNQSSVNSSQA) and 411 to 458 (DQTR…PSDS). The segment covering 459 to 539 (YTSGQNQTLA…MQNSRTTADS (81 aa)) has biased composition (polar residues). The span at 947–956 (NIKNPPNVNQ) shows a compositional bias: polar residues. The segment covering 1222 to 1233 (NSEKRLKTEGDK) has biased composition (basic and acidic residues). 2 stretches are compositionally biased toward polar residues: residues 1259-1272 (KPSQPEATQPEQLA) and 1397-1411 (ARTTHTKASGGSKVS). Residues 1435–1451 (TKAEPPPKKRKQWKEEF) show a composition bias toward basic and acidic residues. Residues 1452–1462 (SSSQSDSSPDM) are compositionally biased toward low complexity.

It is found in the chromosome. Plays an essential role in the protection and maintenance of transcriptional and developmental programs. Protects many bivalent promoters and poised enhancers from hypermethylation, showing a marked preference for these regulatory elements over other types of promoters or enhancers. Mechanistically, cooperates with tet1 and binds to DNA in a common complex to inhibit the binding of dnmt3a/3b and therefore de novo methylation. The protein is Glutamine and serine-rich protein 1 (qser1) of Xenopus laevis (African clawed frog).